A 414-amino-acid polypeptide reads, in one-letter code: Protein SOSEKI 2 (414 aa).

The DIX-like oligomerization domain stretch occupies residues 44 to 135 (RRVQVVYYLT…YVLKGSEITD (92 aa)). The disordered stretch occupies residues 171–273 (SFDDAELYVG…GDPVEPGSGR (103 aa)). Residues 173–192 (DDAELYVGEEEEEEDGEYEL) are compositionally biased toward acidic residues. Residues 205-229 (PQSRCSRGVSTETMESTEQKPNLTK) show a composition bias toward polar residues. Positions 230–242 (TEQDLQVRSDSSD) are enriched in basic and acidic residues. The Association to cell membranes signature appears at 283–284 (CG).

It belongs to the SOSEKI family. Homodimer. Forms long polymer filaments with other SOKs proteins polymers (e.g. SOK1, SOK2, SOK3 and SOK4) crucial for polar localization and biological activity. Binds to ANGUSTIFOLIA (AN). As to expression, expressed during embryogenesis and in roots.

Its subcellular location is the cell membrane. Functionally, part of a three-gene cluster containing FLC, UFC and DFC, which is coordinately regulated in response to vernalization. Also regulated by FLX. SOSEKI proteins (SOK1-5) locally interpret global polarity cues and can influence cell division orientation to coordinate cell polarization relative to body axes, probably by guiding ANGUSTIFOLIA (AN) polarized localization. This chain is Protein SOSEKI 2, found in Arabidopsis thaliana (Mouse-ear cress).